Consider the following 323-residue polypeptide: Lipoyl synthase (323 aa).

The segment at M1–E27 is disordered. [4Fe-4S] cluster-binding residues include C61, C66, C72, C87, C91, C94, and S300. The region spanning W73–L289 is the Radical SAM core domain.

The protein belongs to the radical SAM superfamily. Lipoyl synthase family. [4Fe-4S] cluster serves as cofactor.

It is found in the cytoplasm. The catalysed reaction is [[Fe-S] cluster scaffold protein carrying a second [4Fe-4S](2+) cluster] + N(6)-octanoyl-L-lysyl-[protein] + 2 oxidized [2Fe-2S]-[ferredoxin] + 2 S-adenosyl-L-methionine + 4 H(+) = [[Fe-S] cluster scaffold protein] + N(6)-[(R)-dihydrolipoyl]-L-lysyl-[protein] + 4 Fe(3+) + 2 hydrogen sulfide + 2 5'-deoxyadenosine + 2 L-methionine + 2 reduced [2Fe-2S]-[ferredoxin]. It functions in the pathway protein modification; protein lipoylation via endogenous pathway; protein N(6)-(lipoyl)lysine from octanoyl-[acyl-carrier-protein]: step 2/2. In terms of biological role, catalyzes the radical-mediated insertion of two sulfur atoms into the C-6 and C-8 positions of the octanoyl moiety bound to the lipoyl domains of lipoate-dependent enzymes, thereby converting the octanoylated domains into lipoylated derivatives. This Agrobacterium fabrum (strain C58 / ATCC 33970) (Agrobacterium tumefaciens (strain C58)) protein is Lipoyl synthase.